The chain runs to 2549 residues: Serine/threonine-protein kinase mTOR (2549 aa).

Met-1 is subject to N-acetylmethionine. An interaction with NBN region spans residues 1-651 (MLGTGPAAAT…HVVSQTAVQV (651 aa)). HEAT repeat units follow at residues 16-53 (SSNV…MELR), 55-99 (MSQE…VEGG), 100-137 (NATR…AMAG), 138-179 (DTFT…AISV), 180-220 (PTFF…LILT), 222-276 (QREP…RISS), 277-313 (MEGE…PRHI), 314-364 (TPFT…CCRD), 365-409 (LMEE…AFTD), 410-445 (TQYL…VAVR), 446-494 (SEFK…RAMG), 495-529 (PGIQ…RQIP), 530-563 (QLKK…GLAH), 564-596 (QLAS…EFEG), 597-636 (HSLT…SIHL), 637-683 (ISGH…DERF), 686-724 (HLAQ…MNPA), 727-766 (MPFL…NAPR), 769-811 (RPYM…VSGL), 814-853 (RKWV…STGY), 857-893 (PYRK…LLGA), 894-942 (LDPY…GNLP), 943-988 (LDEF…KCVQ), 989-1027 (FLPQ…KSHI), 1029-1068 (PYMD…GEFK), 1069-1105 (LYLP…LFGA), 1106-1144 (NLDD…RLTE), 1145-1188 (SLDF…GKKY), 1189-1225 (QIFI…LADE), 1226-1273 (EEDP…GAAR), 1274-1311 (RVSK…QAYN), and 1312-1345 (PMAR…ELAL). Ser-567 carries the phosphoserine modification. Position 1162 is a phosphothreonine (Thr-1162). The residue at position 1218 (Lys-1218) is an N6-acetyllysine. Phosphoserine is present on Ser-1261. TPR repeat units follow at residues 1346-1382 (TSQD…GIVL), 1383-1408 (LGER…QKGP), 1409-1442 (TPAI…HFGE), 1443-1473 (LEIQ…NKDD), 1474-1507 (PELM…VNDE), 1508-1541 (TQAK…RDTH), 1542-1574 (DGAF…LDAE), 1575-1614 (LTAM…RREI), 1615-1649 (IRQI…PHED), 1650-1693 (MRTW…PTVH), 1694-1731 (PQVT…AQHA), 1732-1786 (IATE…DRSW), 1787-1846 (YKAW…STEG), 1898-1930 (NNLQ…VKAI), 1931-1970 (QIDT…YHPQ), and 1971-2005 (ALIY…SNTL). The FAT domain occupies 1382-1982 (LLGERAAKCR…IYPLTVASKS (601 aa)). The 1D-myo-inositol hexakisphosphate site is built by Lys-1662, Lys-1702, and Arg-1749. Positions 1812–1867 (DEKKKLRHASGANITNATTAATTAATATTTASTEGSNSESEAESTENSPTPSPLQK) are disordered. Low complexity predominate over residues 1820-1860 (ASGANITNATTAATTAATATTTASTEGSNSESEAESTENSP). The segment at 2012–2144 (VSEELIRVAI…DLELAVPGTY (133 aa)) is sufficient for interaction with the FKBP1A/rapamycin complex. Lys-2066 participates in a covalent cross-link: Glycyl lysine isopeptide (Lys-Gly) (interchain with G-Cter in ubiquitin). A PI3K/PI4K catalytic domain is found at 2156-2469 (IAPSLQVITS…GVELGEPAHK (314 aa)). Phosphoserine; by TBK1 is present on Ser-2159. The segment at 2162–2168 (VITSKQR) is G-loop. Thr-2164 carries the post-translational modification Phosphothreonine. Ser-2165 and Gln-2167 together coordinate ATP. A Phosphothreonine; by PKB/AKT1 modification is found at Thr-2173. ATP contacts are provided by Leu-2185, Lys-2187, Glu-2190, Tyr-2225, Gly-2238, Trp-2239, Val-2240, and Thr-2245. The interaction with MLST8 stretch occupies residues 2258–2296 (KILLNIEHRIMLRMAPDYDHLTLMQKVEVFEHAVNNTAG). The interval 2335-2343 (GLGDRHPSN) is catalytic loop. Asn-2343 is a binding site for Mg(2+). ATP contacts are provided by Met-2345 and Ile-2356. Residues 2355–2380 (HIDFGDCFEVAMTREKFPEKIPFRLT) are activation loop. Mg(2+) is bound at residue Asp-2357. Residue Thr-2446 is modified to Phosphothreonine; by RPS6KB1. Ser-2448 carries the phosphoserine; by RPS6KB1 modification. At Ser-2478 the chain carries Phosphoserine. A Phosphoserine; by autocatalysis modification is found at Ser-2481. An FATC domain is found at 2517-2549 (DTLDVPTQVELLIKQATSHENLCQCYIGWCPFW).

This sequence belongs to the PI3/PI4-kinase family. In terms of assembly, part of the mechanistic target of rapamycin complex 1 (mTORC1) which contains MTOR, MLST8 and RPTOR. The mTORC1 complex is a 1 Md obligate dimer of two stoichiometric heterotetramers with overall dimensions of 290 A x 210 A x 135 A. It has a rhomboid shape and a central cavity, the dimeric interfaces are formed by interlocking interactions between the two MTOR and the two RPTOR subunits. The MLST8 subunit forms distal foot-like protuberances, and contacts only one MTOR within the complex, while the small AKT1S1/PRAS40 localizes to the midsection of the central core, in close proximity to RPTOR. mTORC1 associates with AKT1S1/PRAS40, which inhibits its activity by blocking MTOR substrate-recruitment site. Component of the mechanistic target of rapamycin complex 2 (mTORC2), consisting in two heterotretramers composed of MTOR, MLST8, RICTOR and MAPKAP1/SIN1. Interacts with PLPP7 and PML. Interacts with PRR5 and RICTOR; the interaction is direct within the mTORC2 complex and interaction with RICTOR is enhanced by deubiquitination of RICTOR by USP9X. mTORC1 and mTORC2 associate with DEPTOR, which regulates their activity. Interacts with WAC; WAC positively regulates MTOR activity by promoting the assembly of the TTT complex composed of TELO2, TTI1 and TTI2 and the RUVBL complex composed of RUVBL1 and RUVBL2 into the TTT-RUVBL complex which leads to the dimerization of the mTORC1 complex and its subsequent activation. Interacts with UBQLN1. Interacts with TTI1 and TELO2. Interacts with CLIP1; phosphorylates and regulates CLIP1. Interacts with NBN. Interacts with HTR6. Interacts with BRAT1. Interacts with MEAK7 (via C-terminal domain); the interaction increases upon nutrient stimulation. Interacts with TM4SF5; the interaction is positively regulated by arginine and is negatively regulated by leucine. Interacts with GPR137B. Interacts with NCKAP1L. Interacts with TPCN1 and TPCN2; the interaction is required for TPCN1 and TPCN2 sensitivity to ATP. Interacts with ATP6V1A and with CRYAB, forming a ternary complex. Interacts with SLC38A7; this interaction mediates the recruitment of mTORC1 to the lysosome and its subsequent activation. Interacts with TSPAN8. Autophosphorylates when part of mTORC1 or mTORC2. Phosphorylation at Ser-1261, Ser-2159 and Thr-2164 promotes autophosphorylation. Phosphorylated at Ser-2448 by RPS6KB1. Phosphorylation in the kinase domain modulates the interactions of MTOR with RPTOR and AKT1S1/PRAS40 and leads to increased intrinsic mTORC1 kinase activity. Phosphorylation at Ser-2159 by TBK1 in response to growth factors and pathogen recognition receptors promotes mTORC1 activity. Phosphorylation at Ser-2159 by TBK1 in response to EGF growth factor promotes mTORC2 activity, leading to AKT1 phosphorylation and activation. Phosphorylation at Thr-2173 in the ATP-binding region by AKT1 strongly reduces kinase activity. In terms of processing, ubiquitinated at Lys-2066 by the SCF(FBXO22) complex via 'Lys-27'-linked ubiquitination prevents mTORC1 substrate recruitment. In terms of tissue distribution, expressed in numerous tissues, with highest levels in testis.

Its subcellular location is the lysosome membrane. The protein resides in the endoplasmic reticulum membrane. It localises to the golgi apparatus membrane. It is found in the cell membrane. The protein localises to the mitochondrion outer membrane. Its subcellular location is the cytoplasm. The protein resides in the nucleus. It localises to the PML body. It is found in the microsome membrane. The protein localises to the cytoplasmic vesicle. Its subcellular location is the phagosome. The catalysed reaction is L-seryl-[protein] + ATP = O-phospho-L-seryl-[protein] + ADP + H(+). It catalyses the reaction L-threonyl-[protein] + ATP = O-phospho-L-threonyl-[protein] + ADP + H(+). It carries out the reaction L-tyrosyl-[protein] + ATP = O-phospho-L-tyrosyl-[protein] + ADP + H(+). The mTORC1 complex is activated in response to nutrients, growth factors or amino acids: activation requires relocalization of the mTORC1 complex to lysosomes that is mediated by the Ragulator complex, SLC38A9, and the Rag GTPases RagA/RRAGA, RagB/RRAGB, RagC/RRAGC and RagD/RRAGD. Activation of mTORC1 by growth factors such as insulin involves AKT1-mediated phosphorylation of TSC1-TSC2, which leads to the activation of the RHEB GTPase a potent activator of the protein kinase activity of mTORC1. Insulin-stimulated and amino acid-dependent phosphorylation at Ser-1261 promotes autophosphorylation and the activation of mTORC1. On the other hand, low cellular energy levels can inhibit mTORC1 through activation of PRKAA1 while hypoxia inhibits mTORC1 through a REDD1-dependent mechanism which may also require PRKAA1. The kinase activity of MTOR within the mTORC1 complex is positively regulated by MLST8. The kinase activity of MTOR is inhibited by DEPTOR and AKT1S1. The non-canonical mTORC1 complex is independent of the RHEB GTPase and specifically mediates phosphorylation of MiT/TFE factors TFEB and TFE3 but not other mTORC1 substrates: it is activated by FLCN, which activates Rag GTPases RagC/RRAGC and RagD/RRAGD. MTOR is the target of the immunosuppressive and anti-cancer drug rapamycin which acts in complex with FKBP1A/FKBP12, and specifically inhibits its kinase activity. mTORC2 is also activated by growth factors, but seems to be nutrient-insensitive. mTORC2 associates and is directly activated by ribosomes. mTORC2 may also be regulated by RHEB but in an indirect manner through the PI3K signaling pathway. Its function is as follows. Serine/threonine protein kinase which is a central regulator of cellular metabolism, growth and survival in response to hormones, growth factors, nutrients, energy and stress signals. MTOR directly or indirectly regulates the phosphorylation of at least 800 proteins. Functions as part of 2 structurally and functionally distinct signaling complexes mTORC1 and mTORC2 (mTOR complex 1 and 2). In response to nutrients, growth factors or amino acids, mTORC1 is recruited to the lysosome membrane and promotes protein, lipid and nucleotide synthesis by phosphorylating key regulators of mRNA translation and ribosome synthesis. This includes phosphorylation of EIF4EBP1 and release of its inhibition toward the elongation initiation factor 4E (eiF4E). Moreover, phosphorylates and activates RPS6KB1 and RPS6KB2 that promote protein synthesis by modulating the activity of their downstream targets including ribosomal protein S6, eukaryotic translation initiation factor EIF4B, and the inhibitor of translation initiation PDCD4. Stimulates the pyrimidine biosynthesis pathway, both by acute regulation through RPS6KB1-mediated phosphorylation of the biosynthetic enzyme CAD, and delayed regulation, through transcriptional enhancement of the pentose phosphate pathway which produces 5-phosphoribosyl-1-pyrophosphate (PRPP), an allosteric activator of CAD at a later step in synthesis, this function is dependent on the mTORC1 complex. Regulates ribosome synthesis by activating RNA polymerase III-dependent transcription through phosphorylation and inhibition of MAF1 an RNA polymerase III-repressor. Activates dormant ribosomes by mediating phosphorylation of SERBP1, leading to SERBP1 inactivation and reactivation of translation. In parallel to protein synthesis, also regulates lipid synthesis through SREBF1/SREBP1 and LPIN1. To maintain energy homeostasis mTORC1 may also regulate mitochondrial biogenesis through regulation of PPARGC1A. In the same time, mTORC1 inhibits catabolic pathways: negatively regulates autophagy through phosphorylation of ULK1. Under nutrient sufficiency, phosphorylates ULK1 at 'Ser-758', disrupting the interaction with AMPK and preventing activation of ULK1. Also prevents autophagy through phosphorylation of the autophagy inhibitor DAP. Also prevents autophagy by phosphorylating RUBCNL/Pacer under nutrient-rich conditions. Prevents autophagy by mediating phosphorylation of AMBRA1, thereby inhibiting AMBRA1 ability to mediate ubiquitination of ULK1 and interaction between AMBRA1 and PPP2CA. mTORC1 exerts a feedback control on upstream growth factor signaling that includes phosphorylation and activation of GRB10 a INSR-dependent signaling suppressor. Among other potential targets mTORC1 may phosphorylate CLIP1 and regulate microtubules. The mTORC1 complex is inhibited in response to starvation and amino acid depletion. The non-canonical mTORC1 complex, which acts independently of RHEB, specifically mediates phosphorylation of MiT/TFE factors MITF, TFEB and TFE3 in the presence of nutrients, promoting their cytosolic retention and inactivation. Upon starvation or lysosomal stress, inhibition of mTORC1 induces dephosphorylation and nuclear translocation of TFEB and TFE3, promoting their transcription factor activity. The mTORC1 complex regulates pyroptosis in macrophages by promoting GSDMD oligomerization. MTOR phosphorylates RPTOR which in turn inhibits mTORC1. As part of the mTORC2 complex, MTOR transduces signals from growth factors to pathways involved in proliferation, cytoskeletal organization, lipogenesis and anabolic output. In response to growth factors, mTORC2 phosphorylates and activates AGC protein kinase family members, including AKT (AKT1, AKT2 and AKT3), PKC (PRKCA, PRKCB and PRKCE) and SGK1. In contrast to mTORC1, mTORC2 is nutrient-insensitive. mTORC2 plays a critical role in AKT1 activation by mediating phosphorylation of different sites depending on the context, such as 'Thr-450', 'Ser-473', 'Ser-477' or 'Thr-479', facilitating the phosphorylation of the activation loop of AKT1 on 'Thr-308' by PDPK1/PDK1 which is a prerequisite for full activation. mTORC2 also regulates the phosphorylation of SGK1 at 'Ser-422'. mTORC2 may regulate the actin cytoskeleton, through phosphorylation of PRKCA, PXN and activation of the Rho-type guanine nucleotide exchange factors RHOA and RAC1A or RAC1B. The mTORC2 complex also phosphorylates various proteins involved in insulin signaling, such as FBXW8 and IGF2BP1. May also regulate insulin signaling by acting as a tyrosine protein kinase that catalyzes phosphorylation of IGF1R and INSR; additional evidence are however required to confirm this result in vivo. Regulates osteoclastogenesis by adjusting the expression of CEBPB isoforms. Plays an important regulatory role in the circadian clock function; regulates period length and rhythm amplitude of the suprachiasmatic nucleus (SCN) and liver clocks. The polypeptide is Serine/threonine-protein kinase mTOR (Homo sapiens (Human)).